The sequence spans 68 residues: Putative protein YfaH (68 aa).

The protein is Putative protein YfaH (yfaH) of Escherichia coli (strain K12).